The following is a 457-amino-acid chain: Pup--protein ligase (457 aa).

Glu-9 lines the Mg(2+) pocket. Arg-53 provides a ligand contact to ATP. Tyr-55 contributes to the Mg(2+) binding site. Asp-57 functions as the Proton acceptor in the catalytic mechanism. Residue Glu-63 participates in Mg(2+) binding. Positions 66 and 424 each coordinate ATP.

The protein belongs to the Pup ligase/Pup deamidase family. Pup-conjugating enzyme subfamily.

The catalysed reaction is ATP + [prokaryotic ubiquitin-like protein]-L-glutamate + [protein]-L-lysine = ADP + phosphate + N(6)-([prokaryotic ubiquitin-like protein]-gamma-L-glutamyl)-[protein]-L-lysine.. The protein operates within protein degradation; proteasomal Pup-dependent pathway. Its pathway is protein modification; protein pupylation. Catalyzes the covalent attachment of the prokaryotic ubiquitin-like protein modifier Pup to the proteasomal substrate proteins, thereby targeting them for proteasomal degradation. This tagging system is termed pupylation. The ligation reaction involves the side-chain carboxylate of the C-terminal glutamate of Pup and the side-chain amino group of a substrate lysine. The sequence is that of Pup--protein ligase from Xylanimonas cellulosilytica (strain DSM 15894 / JCM 12276 / CECT 5975 / KCTC 9989 / LMG 20990 / NBRC 107835 / XIL07).